A 171-amino-acid chain; its full sequence is Large ribosomal subunit protein uL10 (171 aa).

This sequence belongs to the universal ribosomal protein uL10 family. As to quaternary structure, part of the ribosomal stalk of the 50S ribosomal subunit. The N-terminus interacts with L11 and the large rRNA to form the base of the stalk. The C-terminus forms an elongated spine to which L12 dimers bind in a sequential fashion forming a multimeric L10(L12)X complex.

Functionally, forms part of the ribosomal stalk, playing a central role in the interaction of the ribosome with GTP-bound translation factors. This is Large ribosomal subunit protein uL10 from Corynebacterium glutamicum (strain ATCC 13032 / DSM 20300 / JCM 1318 / BCRC 11384 / CCUG 27702 / LMG 3730 / NBRC 12168 / NCIMB 10025 / NRRL B-2784 / 534).